The primary structure comprises 407 residues: MIRYPYFCRMYKECLSCWLESGIPNLGVWPKTIHTTAEKYREYEAREQTDQTQAQELHRSQDRDFETMAKLHIPVMVDEVLHCLSPQKGQIFLDMTFGSGGHTKAILQKESDIVLYALDRDPTAYALAEHLSELYPKQIRAMLGQFSQAETLLMKAGVQPGTFDGVLMDLGCSSMQLDTPERGFSLRKDGPLDMRMDGGRYPDMPTAADVVNAFDQQALASILRTYGEEKHAKKIASAIVQARSIYPITRTQQLASIVAGAFPPSAIYARKDLLQRSTHIATKTFQAVRIFVNNELNELYMGLKTAQKFLRPGGRLVALSFHSLEDRIIKRFLLGISMTERFNLSVRQQVMKTSQLGSDHENTEEVSKRRAPLMWELIHKKVLSPQDQDVQDNPRARSAKLRAAIKL.

S-adenosyl-L-methionine is bound by residues 100 to 102 (GGH), D119, F146, D169, and Q176. A Phosphoserine modification is found at S358.

The protein belongs to the methyltransferase superfamily. RsmH family.

The protein resides in the mitochondrion matrix. It carries out the reaction cytidine(839) in 12S rRNA + S-adenosyl-L-methionine = N(4)-methylcytidine(839) in 12S rRNA + S-adenosyl-L-homocysteine + H(+). Its function is as follows. N4-methylcytidine (m4C) methyltransferase responsible for the methylation of position C839 in mitochondrial 12S rRNA. Involved in the stabilization of 12S rRNA folding, therefore facilitating the assembly of the mitochondrial small ribosomal subunits. The chain is 12S rRNA N(4)-cytidine methyltransferase METTL15 (METTL15) from Pongo abelii (Sumatran orangutan).